A 68-amino-acid polypeptide reads, in one-letter code: Beta-defensin 1 (68 aa).

An N-terminal signal peptide occupies residues 1–21 (MRTSYLLLFTLCLLMSEMASG). Positions 22-32 (DNFLTGLGHRS) are excised as a propeptide. 3 cysteine pairs are disulfide-bonded: Cys37-Cys66, Cys44-Cys59, and Cys49-Cys67.

Belongs to the beta-defensin family. In terms of assembly, monomer. Homodimer.

It localises to the secreted. The protein resides in the membrane. Has bactericidal activity. May act as a ligand for C-C chemokine receptor CCR6. Positively regulates the sperm motility and bactericidal activity in a CCR6-dependent manner. Binds to CCR6 and triggers Ca2+ mobilization in the sperm which is important for its motility. This Presbytis melalophos (Mitred leaf monkey) protein is Beta-defensin 1 (DEFB1).